The chain runs to 301 residues: tRNA dimethylallyltransferase (301 aa).

An ATP-binding site is contributed by 10 to 17; the sequence is GATATGKT. Residue 12 to 17 participates in substrate binding; that stretch reads TATGKT. The interval 35-38 is interaction with substrate tRNA; it reads DSRQ.

It belongs to the IPP transferase family. As to quaternary structure, monomer. Mg(2+) is required as a cofactor.

It catalyses the reaction adenosine(37) in tRNA + dimethylallyl diphosphate = N(6)-dimethylallyladenosine(37) in tRNA + diphosphate. In terms of biological role, catalyzes the transfer of a dimethylallyl group onto the adenine at position 37 in tRNAs that read codons beginning with uridine, leading to the formation of N6-(dimethylallyl)adenosine (i(6)A). This chain is tRNA dimethylallyltransferase, found in Crocosphaera subtropica (strain ATCC 51142 / BH68) (Cyanothece sp. (strain ATCC 51142)).